Reading from the N-terminus, the 72-residue chain is Translation initiation factor IF-1 (72 aa).

In terms of domain architecture, S1-like spans 1–72; it reads MAKEESIEVE…SKGRITYRYK (72 aa).

This sequence belongs to the IF-1 family. In terms of assembly, component of the 30S ribosomal translation pre-initiation complex which assembles on the 30S ribosome in the order IF-2 and IF-3, IF-1 and N-formylmethionyl-tRNA(fMet); mRNA recruitment can occur at any time during PIC assembly.

It localises to the cytoplasm. In terms of biological role, one of the essential components for the initiation of protein synthesis. Stabilizes the binding of IF-2 and IF-3 on the 30S subunit to which N-formylmethionyl-tRNA(fMet) subsequently binds. Helps modulate mRNA selection, yielding the 30S pre-initiation complex (PIC). Upon addition of the 50S ribosomal subunit IF-1, IF-2 and IF-3 are released leaving the mature 70S translation initiation complex. In Chlorobaculum tepidum (strain ATCC 49652 / DSM 12025 / NBRC 103806 / TLS) (Chlorobium tepidum), this protein is Translation initiation factor IF-1.